A 456-amino-acid chain; its full sequence is O-phospho-L-seryl-tRNA:Cys-tRNA synthase 2 (456 aa).

Pyridoxal 5'-phosphate is bound by residues 146 to 147 (AR), Asn251, and 274 to 276 (SGH). Lys277 is subject to N6-(pyridoxal phosphate)lysine.

It belongs to the SepCysS family. As to quaternary structure, homodimer. Interacts with SepRS. It depends on pyridoxal 5'-phosphate as a cofactor.

The catalysed reaction is O-phospho-L-seryl-tRNA(Cys) + hydrogen sulfide + H(+) = L-cysteinyl-tRNA(Cys) + phosphate. Its function is as follows. Converts O-phospho-L-seryl-tRNA(Cys) (Sep-tRNA(Cys)) to L-cysteinyl-tRNA(Cys) (Cys-tRNA(Cys)). This Methanospirillum hungatei JF-1 (strain ATCC 27890 / DSM 864 / NBRC 100397 / JF-1) protein is O-phospho-L-seryl-tRNA:Cys-tRNA synthase 2.